Reading from the N-terminus, the 185-residue chain is MIDDTLLESEERMTQSVEYAREDLTTIRTGRANPSMFNGVQAEYYGVMTPITQMATISVPEPRMLLIKPYEPSIMNAIENAIRNSDLGVNPTNDGQVLRVTVPQLTEERRKEMVRLAKSKGEDARIAIRNIRRKGMDELKRIQKDGEAGEDEVQAAEKELDKTTHEYVSQVDKLIEAKEKELMEV.

This sequence belongs to the RRF family.

The protein resides in the cytoplasm. Functionally, responsible for the release of ribosomes from messenger RNA at the termination of protein biosynthesis. May increase the efficiency of translation by recycling ribosomes from one round of translation to another. The chain is Ribosome-recycling factor from Corynebacterium kroppenstedtii (strain DSM 44385 / JCM 11950 / CIP 105744 / CCUG 35717).